The chain runs to 249 residues: tRNA pseudouridine synthase A (249 aa).

D53 functions as the Nucleophile in the catalytic mechanism. Position 111 (Y111) interacts with substrate.

Belongs to the tRNA pseudouridine synthase TruA family. In terms of assembly, homodimer.

It catalyses the reaction uridine(38/39/40) in tRNA = pseudouridine(38/39/40) in tRNA. Its function is as follows. Formation of pseudouridine at positions 38, 39 and 40 in the anticodon stem and loop of transfer RNAs. The protein is tRNA pseudouridine synthase A of Streptococcus pneumoniae (strain Taiwan19F-14).